The chain runs to 603 residues: MPAENAHIRNFCIIAHIDHGKSTLADRLLDKTGTLTKREAQAQFLDNMAIERERGITIKAQSVRMNYTAKDGKQYVLNLIDTPGHVDFAYEVSRSLAACEGALLVVDATQGVEAQTLSNVYMALDHNLEIIPVINKIDLPSADVDRTRAEIEDVIGIDASVAVPCSAKEGIGIQDILESVVQNVPPPSGSADAPLKALIFDSWYDNYRGVVTLVRVLEGTLKLKQKIKLFSNNKVFEVQELGVFSPFSRPVPQLIAGEVGVLVANVKELQDAKVGDTVTEESRPTAEPFPGFQEVKPMVFSGIFPVDSADYENLRDALAKLVLNDSAFTYEPESSTALGFGFRCGYLGLLHMEIVQERLEREYNLNLITTAPSVVYRITTSKGETLLVDNPAKLPPVQHIEKFEEPILTCHIHVPNDHLGAILKLCQERRGVQKDMKYLGSSGQRVQVTYEMPLAEVVFDFFDKLKSVSRGYASLDYELAGYIESDLARLDILINGDPVDALSVIVHRERAYLRGREVCQKLKEVIPKQMYEVAIQAAIGAKIISRETISAIRKNVLAKCYGGDISRKRKLLEKQKEGKKRMKQVGTVEIPQEAFLAVLKSEQ.

A tr-type G domain is found at 6-188 (AHIRNFCIIA…SVVQNVPPPS (183 aa)). GTP-binding positions include 18–23 (DHGKST) and 135–138 (NKID).

Belongs to the TRAFAC class translation factor GTPase superfamily. Classic translation factor GTPase family. LepA subfamily.

It is found in the cell inner membrane. The enzyme catalyses GTP + H2O = GDP + phosphate + H(+). Functionally, required for accurate and efficient protein synthesis under certain stress conditions. May act as a fidelity factor of the translation reaction, by catalyzing a one-codon backward translocation of tRNAs on improperly translocated ribosomes. Back-translocation proceeds from a post-translocation (POST) complex to a pre-translocation (PRE) complex, thus giving elongation factor G a second chance to translocate the tRNAs correctly. Binds to ribosomes in a GTP-dependent manner. This Myxococcus xanthus (strain DK1622) protein is Elongation factor 4.